Consider the following 517-residue polypeptide: Crotonobetaine/carnitine--CoA ligase (517 aa).

It belongs to the ATP-dependent AMP-binding enzyme family.

The catalysed reaction is 4-(trimethylamino)butanoate + ATP + CoA = 4-(trimethylamino)butanoyl-CoA + AMP + diphosphate. It catalyses the reaction crotonobetaine + ATP + CoA = crotonobetainyl-CoA + AMP + diphosphate. The enzyme catalyses (R)-carnitine + ATP + CoA = (R)-carnitinyl-CoA + AMP + diphosphate. Its pathway is amine and polyamine metabolism; carnitine metabolism. Catalyzes the transfer of CoA to carnitine, generating the initial carnitinyl-CoA needed for the CaiB reaction cycle. Also has activity toward crotonobetaine and gamma-butyrobetaine. This is Crotonobetaine/carnitine--CoA ligase from Escherichia coli (strain ATCC 8739 / DSM 1576 / NBRC 3972 / NCIMB 8545 / WDCM 00012 / Crooks).